The primary structure comprises 371 residues: Gamma-tocopherol methyltransferase, chloroplastic (371 aa).

The transit peptide at 1–65 (MAAAPVFFPS…NSNRIASRLQ (65 aa)) directs the protein to the chloroplast. Positions 153-162 (IVDVGCGIGG) are SAM motif I. The SAM motif II stretch occupies residues 216–224 (GQFDLVWSM). The tract at residues 243–252 (VAAPGATIII) is SAM motif III.

It belongs to the class I-like SAM-binding methyltransferase superfamily. gTMT family. In terms of assembly, homodimer.

It is found in the plastid. The protein localises to the chloroplast inner membrane. The catalysed reaction is picrinine + S-adenosyl-L-methionine = ervincine + S-adenosyl-L-homocysteine + H(+). It functions in the pathway alkaloid biosynthesis; vindoline biosynthesis. In terms of biological role, S-adenosyl-L-methionine-dependent N-methyltransferase involved in the biosynthesis of biologically active monoterpenoid indole alkaloids (MIAs) natural products including vindoline. Inactive with picrinine as substrate. The polypeptide is Gamma-tocopherol methyltransferase, chloroplastic (Catharanthus roseus (Madagascar periwinkle)).